Reading from the N-terminus, the 343-residue chain is Methionine import ATP-binding protein MetN 2 (343 aa).

In terms of domain architecture, ABC transporter spans 2 to 241 (IEFKDVTKTF…PQQAVTKRFV (240 aa)). Position 38–45 (38–45 (GYSGAGKS)) interacts with ATP.

This sequence belongs to the ABC transporter superfamily. Methionine importer (TC 3.A.1.24) family. In terms of assembly, the complex is composed of two ATP-binding proteins (MetN), two transmembrane proteins (MetI) and a solute-binding protein (MetQ).

The protein localises to the cell membrane. The catalysed reaction is L-methionine(out) + ATP + H2O = L-methionine(in) + ADP + phosphate + H(+). It carries out the reaction D-methionine(out) + ATP + H2O = D-methionine(in) + ADP + phosphate + H(+). Functionally, part of the ABC transporter complex MetNIQ involved in methionine import. Responsible for energy coupling to the transport system. The protein is Methionine import ATP-binding protein MetN 2 of Lactiplantibacillus plantarum (strain ATCC BAA-793 / NCIMB 8826 / WCFS1) (Lactobacillus plantarum).